The primary structure comprises 1417 residues: MNNGILHQNYNSKKFDIIKISLASPEVIRSWSHGEVKKPETINYRTFKPERDGLFCAKIFGPIKDYECLCGKYKRLKHRGVVCERCGVEVEQAKVRRERMGHIDLVCPVVHIWYLKSLPSRIGLFLDMPLKNVEKVLYFESYIVTDPGMTPLEKKQLLTDEEYAEALENYGYEFEASMGAEAIRDLLADTDIESEIELLQAECEESKSTAKKEKAIKRLRLLETFQASGNKPEWMVMTVLPVLPPDLRPLVPIEGGRFATSDLNDLYRRVINRNNRLKKLLDLNAPDIIVRNEKRMLQEAVDALLDNGRRGRAVTGSNKRPLKSLADMIKGKQGRFRQNLLGKRVDYSGRSVITVGPSLRLHECGLPKKMALELFKPFVYSKLRLGGHATTIKQAKRMVELEEAVVWDILETVINEHPVLLNRAPTLHRLGIQAFEPRLIEGKAIQLHPLVCAAFNADFDGDQMAVHVPLTVESQLEARVLMMSTNNILSPASGQPIITPTQDIVLGLYYITREKEGARGEGKLFSSYEDVSRAYNSGTIDIHAKIKLRIDRQVFDTKGNTYNEKGVVNTTVGRALLLNILPEGLSFSLLNKVLVKKEISKIINQAFRVLGGKATVVLADKLMYAGFKYSTLSGVSVGVDDMTIPDNKEAKIEEAEKEIKQITEQYQSSLITENERYNNIINIWSKTSDEVGASMMDAISKDTVSINGEKKEIESFNSVYMMAKSGARGSYNQMRQLAGMRGLMAKPDGTMIETAITANFREGLSVLQYFTSTHGARKGLADTALKTANAGYLTRRLVDVAQDLVVIEEDCGTDDGLMFSAIVEDGEVKVPLVERALGRTLAADVVTEKGVVLLEAGTLLDENLVELLDDNGIDMIKVRSPITCKTRRGLCAKCYGRDLARERQVNVGESVGVIAAQSIGEPGTQLTMRTFHTGGAASLGITVSDIKVKTAGKIKFKNIRTVTNKEGQEIVISRAGEIIVSDTMGRVREQHKIPMGAVVPLASGKAVEIGDVIATWDPHAQPLITDVAGKVVLEDVIDGITSKHTYDDLTGQQTIEITSISQRTTSKNLKPVVKIVDEKGAKLKSIPLAVGAVLNVADDSILEVGDIVAKIPLEGSKNKDITGGLPRVAELFEARRPKDAAILSPCDGMVRLGNRDTKEKQRIEIIDKNGHIVEEILLPKSRHLVVFDGEQVSRGDVLADGPTDPHDLLKYKGLEEFADYILIEAQSVYRMQGVVINDKHIETIVRQMLRKAVILDEGDSKFVKDESIELVRILEENDKLRKQGKKEVEYELVLMGITRSSLSTESFLSAASFQETTRVLTEASINSQIDNLRGLKENVLIGRLIPTGTGLAVRKESAKIEKMREELGVEDNMVFTDLSSFNPEEISFDSIQSQKEDKDINEDIEESLRNALESLDF.

Cys-68, Cys-70, Cys-83, and Cys-86 together coordinate Zn(2+). Positions 458, 460, and 462 each coordinate Mg(2+). Residues Cys-811, Cys-884, Cys-891, and Cys-894 each contribute to the Zn(2+) site.

It belongs to the RNA polymerase beta' chain family. The RNAP catalytic core consists of 2 alpha, 1 beta, 1 beta' and 1 omega subunit. When a sigma factor is associated with the core the holoenzyme is formed, which can initiate transcription. The cofactor is Mg(2+). Zn(2+) serves as cofactor.

The enzyme catalyses RNA(n) + a ribonucleoside 5'-triphosphate = RNA(n+1) + diphosphate. Functionally, DNA-dependent RNA polymerase catalyzes the transcription of DNA into RNA using the four ribonucleoside triphosphates as substrates. The sequence is that of DNA-directed RNA polymerase subunit beta' from Francisella tularensis subsp. mediasiatica (strain FSC147).